The primary structure comprises 398 residues: Lysophospholipid transporter LplT (398 aa).

12 helical membrane-spanning segments follow: residues 19–39 (VIVAQFLSAFGDNALLFATLA), 53–73 (VLQMVFVGAYILFAPFVGQIA), 96–116 (ICLGVNPFVGYTLVGIGAAAY), 139–159 (LMEASTIAAILLGSVAGGVLA), 164–184 (IAALVACTLAYAGAVVANLFI), 195–213 (SWQLAAMIRSFFCACVVLW), 227–247 (LFWGAGVTLRFLVVLWVPVAL), 257–277 (YLNAMVAVGIVVGAGAAAKLV), 281–301 (TVSRCMPAGILIGVVVAMFSL), 304–324 (ALLPAYALLLLIGILGGFFVV), 352–372 (NSTMLLMLGLYSLAVMVGVPA), and 373–393 (VATGIGFGVLFALAIAALWIW).

Belongs to the major facilitator superfamily. LplT (TC 2.A.1.42) family.

The protein localises to the cell inner membrane. Catalyzes the facilitated diffusion of 2-acyl-glycero-3-phosphoethanolamine (2-acyl-GPE) into the cell. This Salmonella arizonae (strain ATCC BAA-731 / CDC346-86 / RSK2980) protein is Lysophospholipid transporter LplT.